The chain runs to 303 residues: N-acetyl-D-glucosamine kinase (303 aa).

Residues 4 to 11 and 133 to 140 contribute to the ATP site; these read GFDVGGTK and GFGGGLIY. Zn(2+)-binding residues include His157, Cys177, Cys179, and Cys184.

Belongs to the ROK (NagC/XylR) family. NagK subfamily.

It carries out the reaction N-acetyl-D-glucosamine + ATP = N-acetyl-D-glucosamine 6-phosphate + ADP + H(+). The protein operates within cell wall biogenesis; peptidoglycan recycling. Functionally, catalyzes the phosphorylation of N-acetyl-D-glucosamine (GlcNAc) derived from cell-wall degradation, yielding GlcNAc-6-P. The chain is N-acetyl-D-glucosamine kinase from Vibrio vulnificus (strain CMCP6).